The chain runs to 292 residues: Probable vesicular-fusion protein sec17 homolog (292 aa).

This sequence belongs to the SNAP family.

It is found in the membrane. Its function is as follows. Required for vesicular transport between the endoplasmic reticulum and the Golgi apparatus. This chain is Probable vesicular-fusion protein sec17 homolog, found in Neurospora crassa (strain ATCC 24698 / 74-OR23-1A / CBS 708.71 / DSM 1257 / FGSC 987).